Reading from the N-terminus, the 251-residue chain is FHA domain-containing protein FHA1 (251 aa).

Residues 32–89 (IILGRNSKKSTVDVDLSSLGGGMNISRNHARIFYDFTRRRFSLEVLGKNGCFVEGVLH) form the FHA domain. Over residues 163–174 (EYDDEDDDEEED) the composition is skewed to acidic residues. The interval 163–209 (EYDDEDDDEEEDIRGSGKKTWRDGHEGVYASGEKKREGRSKADREAD) is disordered. Residues 182 to 206 (TWRDGHEGVYASGEKKREGRSKADR) show a composition bias toward basic and acidic residues.

In terms of tissue distribution, expressed in roots and vascular tissues near the shoot apex in young seedlings.

It localises to the nucleus. In terms of biological role, may play a role in the control of plant organ development. Does not show transactivation activity in yeast. The sequence is that of FHA domain-containing protein FHA1 from Arabidopsis thaliana (Mouse-ear cress).